Reading from the N-terminus, the 223-residue chain is Neurotrophic factor BDNF precursor form (223 aa).

Residues 1-5 (SCMKA) form the signal peptide. Residues 6 to 114 (APMKEVSIRG…AANMSMRVRR (109 aa)) constitute a propeptide that is removed on maturation. An N-linked (GlcNAc...) asparagine glycan is attached at asparagine 107. Disulfide bonds link cysteine 127–cysteine 194 and cysteine 172–cysteine 223.

Belongs to the NGF-beta family.

The protein localises to the secreted. Functionally, promotes the survival of neuronal populations that are all located either in the central nervous system or directly connected to it. This is Neurotrophic factor BDNF precursor form (BDNF) from Chilabothrus striatus (Haitian boa constrictor).